The chain runs to 1284 residues: Neurexin-4 (1284 aa).

Positions 1-35 (MRPPRSNTKAAFSSLQFGLLCLLLLVNNGIKSVQA) are cleaved as a signal peptide. Residues 36-1217 (DAFTDYFSDY…LRKAYNEVDS (1182 aa)) are Extracellular-facing. Residues 47 to 185 (CNQPLMERAV…ISMRVELYGC (139 aa)) form the F5/8 type C domain. Residues C47 and C185 are joined by a disulfide bond. 4 N-linked (GlcNAc...) asparagine glycosylation sites follow: N195, N329, N340, and N398. A Laminin G-like 1 domain is found at 220–369 (FKTAFANGVM…FTRVNTIYAC (150 aa)). Cysteines 333 and 369 form a disulfide. The 138-residue stretch at 403–540 (FRTYEETGVM…CGDDVVVDAC (138 aa)) folds into the Laminin G-like 2 domain. Intrachain disulfides connect C507–C540, C546–C557, C551–C566, and C568–C578. Residues 542–579 (MIDRCNPNPCQHKGLCHQNSREFFCDCGHTGYAGAVCH) form the EGF-like 1 domain. A glycan (N-linked (GlcNAc...) asparagine) is linked at N668. Residues 824-962 (FRTTQENSVI…RGLYGISTGC (139 aa)) form the Laminin G-like 3 domain. 4 disulfide bridges follow: C934/C962, C966/C977, C971/C986, and C988/C998. An EGF-like 2 domain is found at 962–999 (CVGRCESNPCLNNGTCIERYDGYSCDCRWSAFKGPICA). N974 carries an N-linked (GlcNAc...) asparagine glycan. In terms of domain architecture, Laminin G-like 4 spans 1032 to 1183 (FTTTIPKGFL…LGTQLTEDFC (152 aa)). N-linked (GlcNAc...) asparagine glycans are attached at residues N1047 and N1137. A disulfide bond links C1147 and C1183. The helical transmembrane segment at 1218–1238 (VLLACLLVILFLLLILMFFLI) threads the bilayer. The Cytoplasmic portion of the chain corresponds to 1239–1284 (GRYLHRHKGDYLTHEDQGADGADDPDDAVLHSTTGHQVRKRTEIFI).

Belongs to the neurexin family. Forms a complex with Nrg and Cont. Forms a complex composed of septa junction proteins Nrx-IV/Nrx, Tsf2/MTf, Cont and Nrg during late embryogenesis. The C-terminal region interacts with coracle. Interacts with Patj in cis form. In terms of tissue distribution, found in septate junctions of epithelial and glial cells.

It localises to the cell membrane. Its subcellular location is the cell junction. It is found in the septate junction. Seems to play a role in the formation and function of septate junctions. Septate junctions, which are the equivalent of vertebrates tight junctions, are characterized by regular arrays of transverse structures that span the intermembrane space and form a physical barrier to diffusion. Required for the blood-brain barrier formation. The polypeptide is Neurexin-4 (Nrx-IV) (Drosophila melanogaster (Fruit fly)).